Here is a 156-residue protein sequence, read N- to C-terminus: 6,7-dimethyl-8-ribityllumazine synthase (156 aa).

Residues Phe-23, 57–59 (AFE), and 81–83 (AVI) each bind 5-amino-6-(D-ribitylamino)uracil. 86-87 (ST) provides a ligand contact to (2S)-2-hydroxy-3-oxobutyl phosphate. His-89 (proton donor) is an active-site residue. Phe-114 lines the 5-amino-6-(D-ribitylamino)uracil pocket. Position 128 (Arg-128) interacts with (2S)-2-hydroxy-3-oxobutyl phosphate.

It belongs to the DMRL synthase family.

It catalyses the reaction (2S)-2-hydroxy-3-oxobutyl phosphate + 5-amino-6-(D-ribitylamino)uracil = 6,7-dimethyl-8-(1-D-ribityl)lumazine + phosphate + 2 H2O + H(+). It participates in cofactor biosynthesis; riboflavin biosynthesis; riboflavin from 2-hydroxy-3-oxobutyl phosphate and 5-amino-6-(D-ribitylamino)uracil: step 1/2. Functionally, catalyzes the formation of 6,7-dimethyl-8-ribityllumazine by condensation of 5-amino-6-(D-ribitylamino)uracil with 3,4-dihydroxy-2-butanone 4-phosphate. This is the penultimate step in the biosynthesis of riboflavin. The protein is 6,7-dimethyl-8-ribityllumazine synthase of Campylobacter lari (strain RM2100 / D67 / ATCC BAA-1060).